The sequence spans 397 residues: CCA-adding enzyme (397 aa).

Positions 26 and 29 each coordinate ATP. CTP-binding residues include G26 and R29. Mg(2+)-binding residues include D39 and D41. R110, D153, R156, R159, and R162 together coordinate ATP. R110, D153, R156, R159, and R162 together coordinate CTP.

It belongs to the tRNA nucleotidyltransferase/poly(A) polymerase family. Bacterial CCA-adding enzyme type 3 subfamily. Homodimer. Mg(2+) serves as cofactor.

The catalysed reaction is a tRNA precursor + 2 CTP + ATP = a tRNA with a 3' CCA end + 3 diphosphate. It catalyses the reaction a tRNA with a 3' CCA end + 2 CTP + ATP = a tRNA with a 3' CCACCA end + 3 diphosphate. Its function is as follows. Catalyzes the addition and repair of the essential 3'-terminal CCA sequence in tRNAs without using a nucleic acid template. Adds these three nucleotides in the order of C, C, and A to the tRNA nucleotide-73, using CTP and ATP as substrates and producing inorganic pyrophosphate. tRNA 3'-terminal CCA addition is required both for tRNA processing and repair. Also involved in tRNA surveillance by mediating tandem CCA addition to generate a CCACCA at the 3' terminus of unstable tRNAs. While stable tRNAs receive only 3'-terminal CCA, unstable tRNAs are marked with CCACCA and rapidly degraded. This is CCA-adding enzyme from Bacillus thuringiensis subsp. konkukian (strain 97-27).